The chain runs to 306 residues: tRNA dimethylallyltransferase (306 aa).

An ATP-binding site is contributed by 6-13; sequence GPTASGKS. A substrate-binding site is contributed by 8-13; it reads TASGKS.

The protein belongs to the IPP transferase family. Monomer. The cofactor is Mg(2+).

The catalysed reaction is adenosine(37) in tRNA + dimethylallyl diphosphate = N(6)-dimethylallyladenosine(37) in tRNA + diphosphate. In terms of biological role, catalyzes the transfer of a dimethylallyl group onto the adenine at position 37 in tRNAs that read codons beginning with uridine, leading to the formation of N6-(dimethylallyl)adenosine (i(6)A). This chain is tRNA dimethylallyltransferase, found in Sphingopyxis alaskensis (strain DSM 13593 / LMG 18877 / RB2256) (Sphingomonas alaskensis).